The sequence spans 216 residues: Octanoyltransferase (216 aa).

In terms of domain architecture, BPL/LPL catalytic spans 33–216; it reads AATADELWIV…ANRLSTSLSR (184 aa). Substrate contacts are provided by residues 72–79, 148–150, and 162–164; these read RGGEVTYH, ALG, and GVS. The active-site Acyl-thioester intermediate is the C180.

Belongs to the LipB family.

The protein resides in the cytoplasm. The catalysed reaction is octanoyl-[ACP] + L-lysyl-[protein] = N(6)-octanoyl-L-lysyl-[protein] + holo-[ACP] + H(+). The protein operates within protein modification; protein lipoylation via endogenous pathway; protein N(6)-(lipoyl)lysine from octanoyl-[acyl-carrier-protein]: step 1/2. Catalyzes the transfer of endogenously produced octanoic acid from octanoyl-acyl-carrier-protein onto the lipoyl domains of lipoate-dependent enzymes. Lipoyl-ACP can also act as a substrate although octanoyl-ACP is likely to be the physiological substrate. The polypeptide is Octanoyltransferase (Janthinobacterium sp. (strain Marseille) (Minibacterium massiliensis)).